The primary structure comprises 106 residues: Small ribosomal subunit protein bS20 (106 aa).

A disordered region spans residues 1 to 32 (MAQKKPKRNLSALKRHRQSLKRRLRNKAKKSA).

As to quaternary structure, part of the 30S ribosomal subunit.

In terms of biological role, one of the primary rRNA binding proteins, it binds directly to 16S rRNA where it nucleates assembly of the bottom of the body of the 30S subunit, by binding to several RNA helices of the 16S rRNA. The chain is Small ribosomal subunit protein bS20 (rpsT) from Thermus thermophilus (strain ATCC 27634 / DSM 579 / HB8).